Consider the following 264-residue polypeptide: DNA-directed RNA polymerase subunit Rpo3 (264 aa).

Positions 203, 206, and 209 each coordinate [3Fe-4S] cluster.

This sequence belongs to the archaeal Rpo3/eukaryotic RPB3 RNA polymerase subunit family. Part of the RNA polymerase complex. [3Fe-4S] cluster is required as a cofactor.

Its subcellular location is the cytoplasm. The enzyme catalyses RNA(n) + a ribonucleoside 5'-triphosphate = RNA(n+1) + diphosphate. In terms of biological role, DNA-dependent RNA polymerase (RNAP) catalyzes the transcription of DNA into RNA using the four ribonucleoside triphosphates as substrates. The chain is DNA-directed RNA polymerase subunit Rpo3 from Methanothermobacter thermautotrophicus (strain ATCC 29096 / DSM 1053 / JCM 10044 / NBRC 100330 / Delta H) (Methanobacterium thermoautotrophicum).